A 1987-amino-acid chain; its full sequence is Transcription factor 20 (1987 aa).

The span at 1 to 22 (MQSFREQSSYHGNQQSYPQEVH) shows a compositional bias: polar residues. Disordered regions lie at residues 1 to 79 (MQSF…QGYQ), 96 to 432 (DTVA…GNVP), 446 to 481 (LSPT…DPGL), 502 to 816 (LLSD…GTAR), and 844 to 891 (PHWG…SLSE). Over residues 51–74 (TGSSSSGRRGTAAAAAAMASETSG) the composition is skewed to low complexity. Position 59 is an omega-N-methylarginine (arginine 59). Polar residues predominate over residues 121–142 (QGSSFGNQYASEGHVSQFQAQH). Residues 163-205 (SAQYQQQASSQQQQQQQQQQQQQQQQQQQQVQQLRQQLYQSHQ) show a composition bias toward low complexity. The span at 206 to 235 (PLPQTTGQPASGSSHLQPMQRPSTLPSSAG) shows a compositional bias: polar residues. Low complexity predominate over residues 248–277 (QSSASSSSSSSFPSPQRFSQSGQSYDGSYS). The segment covering 289–311 (VGSNAQAYGTQSNYSYQPQSMKN) has biased composition (polar residues). Lysine 316 participates in a covalent cross-link: Glycyl lysine isopeptide (Lys-Gly) (interchain with G-Cter in SUMO2). Residues 322 to 354 (QQGQQQQQQQPQPQQQQPQQQQQQQQQQQHPPQ) show a composition bias toward low complexity. Residues 357-377 (MQYTNAATKMPLQSQVGQYNQ) show a composition bias toward polar residues. A compositionally biased stretch (low complexity) spans 396–416 (SNPSPAASVVQSPSCSSTPSP). A compositionally biased stretch (polar residues) spans 417 to 432 (LMQSGENLQCGQGNVP). Residues 446–456 (LSPTPSMMPSP) are compositionally biased toward low complexity. Serine 447 and serine 458 each carry phosphoserine. 3 stretches are compositionally biased toward polar residues: residues 526-537 (SCTNSEGSSQPE), 566-576 (LSGQSTSSDTT), and 585-605 (AGSS…TSPA). 4 positions are modified to phosphoserine: serine 567, serine 588, serine 603, and serine 612. A compositionally biased stretch (polar residues) spans 618-627 (TSLSSEGNTK). At lysine 631 the chain carries N6-acetyllysine. The segment covering 645–657 (RVEKSGGQDKGSQ) has biased composition (basic and acidic residues). The segment covering 666–682 (RPPSNSGVKEISHTSLP) has biased composition (polar residues). Phosphoserine is present on serine 669. Positions 693 to 715 (GNKNGDNNSSNHNGEGNGPSSHS) are enriched in low complexity. Positions 722-731 (TGRTEPSKSP) are enriched in polar residues. Glycyl lysine isopeptide (Lys-Gly) (interchain with G-Cter in SUMO2) cross-links involve residues lysine 739, lysine 762, lysine 777, lysine 852, lysine 861, and lysine 873. Residues 761-777 (EKGDFGSHGERKGRNEK) are compositionally biased toward basic and acidic residues. Serine 900 carries the post-translational modification Phosphoserine. Glycyl lysine isopeptide (Lys-Gly) (interchain with G-Cter in SUMO2) cross-links involve residues lysine 949 and lysine 951. The interval 949–1065 (KLKSQSGQIK…GDPHHMNPHM (117 aa)) is disordered. A Glycyl lysine isopeptide (Lys-Gly) (interchain with G-Cter in SUMO1); alternate cross-link involves residue lysine 958. Lysine 958 participates in a covalent cross-link: Glycyl lysine isopeptide (Lys-Gly) (interchain with G-Cter in SUMO2); alternate. Over residues 974 to 989 (KSGDHCHPTSIKHETY) the composition is skewed to basic and acidic residues. Lysine 985 is covalently cross-linked (Glycyl lysine isopeptide (Lys-Gly) (interchain with G-Cter in SUMO2)). Phosphoserine occurs at positions 994 and 1033. Lysine 1043 participates in a covalent cross-link: Glycyl lysine isopeptide (Lys-Gly) (interchain with G-Cter in SUMO2). At arginine 1052 the chain carries Omega-N-methylarginine. Serine 1081 is subject to Phosphoserine. Glycyl lysine isopeptide (Lys-Gly) (interchain with G-Cter in SUMO2) cross-links involve residues lysine 1114, lysine 1126, lysine 1165, lysine 1201, lysine 1206, lysine 1211, lysine 1238, lysine 1259, lysine 1295, and lysine 1302. The interval 1136 to 1372 (VIAAAQHRQE…SPAKTKILPP (237 aa)) is disordered. The span at 1158 to 1170 (DRVRSPLKNDKDG) shows a compositional bias: basic and acidic residues. Positions 1198-1219 (LPAKSMELKHSSQKLQESCWDL) are leucine-zipper. Residues 1282-1295 (RRRVRSFISPIPSK) carry the Nuclear localization signal motif. Composition is skewed to basic and acidic residues over residues 1305 to 1321 (NADD…EGAD) and 1332 to 1346 (HSQD…DSSK). Position 1333 is a phosphoserine (serine 1333). Residue lysine 1337 forms a Glycyl lysine isopeptide (Lys-Gly) (interchain with G-Cter in SUMO2) linkage. Position 1363 is a phosphoserine (serine 1363). Residue lysine 1366 forms a Glycyl lysine isopeptide (Lys-Gly) (interchain with G-Cter in SUMO2) linkage. Residue serine 1389 is modified to Phosphoserine. Positions 1415-1434 (SLKSGPPEGGTVATQEAEME) are disordered. Glycyl lysine isopeptide (Lys-Gly) (interchain with G-Cter in SUMO2) cross-links involve residues lysine 1417, lysine 1437, lysine 1456, and lysine 1474. Residues 1446–1636 (SVTNQESNVE…KQAVPIVEPQ (191 aa)) are disordered. Residues 1463–1479 (EEWRGSGDDKVKTEAHV) show a composition bias toward basic and acidic residues. The segment covering 1481–1501 (TASTGKEPSGTMTSTASQKPG) has biased composition (polar residues). Lysine 1538 is covalently cross-linked (Glycyl lysine isopeptide (Lys-Gly) (interchain with G-Cter in SUMO2)). The residue at position 1550 (serine 1550) is a Phosphoserine. A Glycyl lysine isopeptide (Lys-Gly) (interchain with G-Cter in SUMO2) cross-link involves residue lysine 1552. Residues 1565–1579 (GKKKGRPIGSVNKQK) constitute a DNA-binding region (a.T hook). Over residues 1584–1594 (QPPPPPQPPQM) the composition is skewed to pro residues. Residues 1604–1628 (KPKKQRQRRERRKPGAQPRKRKTKQ) carry the Nuclear localization signal motif. The segment covering 1606–1627 (KKQRQRRERRKPGAQPRKRKTK) has biased composition (basic residues). Lysine 1641 participates in a covalent cross-link: Glycyl lysine isopeptide (Lys-Gly) (interchain with G-Cter in SUMO2). 2 disordered regions span residues 1685–1710 (QTKL…SKVL) and 1760–1865 (TLPK…GPEL). Serine 1697 carries the post-translational modification Phosphoserine. Residues threonine 1699, threonine 1790, and threonine 1792 each carry the phosphothreonine modification. Residues 1812-1819 (RFKRRHRS) carry the Nuclear localization signal motif. A compositionally biased stretch (polar residues) spans 1850–1859 (DTKPSVPTTS). A C2HC pre-PHD-type; degenerate zinc finger spans residues 1856 to 1892 (PTTSEGGPELELQIPELPLDSNEFWVHEGCILWANGI). The PHD-type zinc-finger motif lies at 1912–1960 (MKCSHCQEAGATLGCYNKGCSFRYHYPCAIDADCLLHEENFSVRCPKHK). The interval 1966–1987 (PLPPLQNKTAKGSLSTEQSERG) is disordered. Over residues 1971-1987 (QNKTAKGSLSTEQSERG) the composition is skewed to polar residues.

Homodimer. Interacts with RNF4 and JUN. Binds to the regulatory region of MMP3. In terms of tissue distribution, expressed in brain, lung, liver, kidney and testes.

Its subcellular location is the nucleus. Transcriptional activator that binds to the regulatory region of MMP3 and thereby controls stromelysin expression. It stimulates the activity of various transcriptional activators such as JUN, SP1, PAX6 and ETS1, suggesting a function as a coactivator. This chain is Transcription factor 20 (Tcf20), found in Mus musculus (Mouse).